A 366-amino-acid chain; its full sequence is NADH-quinone oxidoreductase subunit D (366 aa).

It belongs to the complex I 49 kDa subunit family. In terms of assembly, NDH-1 is composed of 14 different subunits. Subunits NuoB, C, D, E, F, and G constitute the peripheral sector of the complex.

It localises to the cell membrane. The catalysed reaction is a quinone + NADH + 5 H(+)(in) = a quinol + NAD(+) + 4 H(+)(out). Functionally, NDH-1 shuttles electrons from NADH, via FMN and iron-sulfur (Fe-S) centers, to quinones in the respiratory chain. The immediate electron acceptor for the enzyme in this species is believed to be a menaquinone. Couples the redox reaction to proton translocation (for every two electrons transferred, four hydrogen ions are translocated across the cytoplasmic membrane), and thus conserves the redox energy in a proton gradient. The chain is NADH-quinone oxidoreductase subunit D from Geobacillus thermodenitrificans (strain NG80-2).